Here is a 474-residue protein sequence, read N- to C-terminus: Pyoverdine export outer membrane protein OpmQ (474 aa).

A signal peptide spans 1–17 (MSMKNLSLISACLLLGA). Cys18 carries the N-palmitoyl cysteine lipid modification. Cys18 carries S-diacylglycerol cysteine lipidation.

This sequence belongs to the outer membrane factor (OMF) (TC 1.B.17) family. In terms of assembly, part of the tripartite efflux system PvdRT-OpmQ, which is composed of an inner membrane component with both ATPase and permease domains, PvdT, a periplasmic membrane fusion protein, PvdR, and an outer membrane component, OpmQ.

It is found in the cell outer membrane. Its function is as follows. Part of the tripartite efflux system PvdRT-OpmQ required for the secretion into the extracellular milieu of the siderophore pyoverdine (PVD), which is involved in iron acquisition. The system is responsible for export of newly synthesized PVD after the final steps of biosynthesis have taken place in the periplasm. It is also responsible for recycling of PVD after internalization of ferri-PVD into the periplasm by the outer-membrane receptor FpvA and release of iron from PVD, thus making PVD available for new cycles of iron uptake. In addition, can expel unwanted metals complexed with PVD from the periplasm into the extracellular medium. The protein is Pyoverdine export outer membrane protein OpmQ of Pseudomonas aeruginosa (strain ATCC 15692 / DSM 22644 / CIP 104116 / JCM 14847 / LMG 12228 / 1C / PRS 101 / PAO1).